The following is a 739-amino-acid chain: Pre-mRNA-splicing factor ATP-dependent RNA helicase ddx-15 (739 aa).

Over residues 1 to 19 the composition is skewed to basic and acidic residues; the sequence is MSSRHRLDLDGSGRGDRRR. Residues 1–49 form a disordered region; that stretch reads MSSRHRLDLDGSGRGDRRRSPNRRSRSRSRSPHRRSSPDRKRQIGAVGN. Basic residues predominate over residues 20-35; sequence SPNRRSRSRSRSPHRR. Residues 86 to 257 enclose the Helicase ATP-binding domain; it reads MELLRNNQCI…FEDCPLLSVP (172 aa). An ATP-binding site is contributed by 99–106; it reads GETGSGKT. The DEAH box signature appears at 204 to 207; it reads DEAH. The Helicase C-terminal domain maps to 282–462; that stretch reads TVIQIHMVEE…SVVLQLKKLG (181 aa).

This sequence belongs to the DEAD box helicase family. DEAH subfamily. DDX15/PRP43 sub-subfamily.

The protein localises to the nucleus. It carries out the reaction ATP + H2O = ADP + phosphate + H(+). Its function is as follows. Pre-mRNA processing factor involved in disassembly of spliceosomes after the release of mature mRNA. This Caenorhabditis elegans protein is Pre-mRNA-splicing factor ATP-dependent RNA helicase ddx-15.